Consider the following 495-residue polypeptide: Glutamyl-tRNA(Gln) amidotransferase subunit A (495 aa).

Residues lysine 78 and serine 158 each act as charge relay system in the active site. Serine 182 functions as the Acyl-ester intermediate in the catalytic mechanism.

This sequence belongs to the amidase family. GatA subfamily. In terms of assembly, heterotrimer of A, B and C subunits.

It catalyses the reaction L-glutamyl-tRNA(Gln) + L-glutamine + ATP + H2O = L-glutaminyl-tRNA(Gln) + L-glutamate + ADP + phosphate + H(+). In terms of biological role, allows the formation of correctly charged Gln-tRNA(Gln) through the transamidation of misacylated Glu-tRNA(Gln) in organisms which lack glutaminyl-tRNA synthetase. The reaction takes place in the presence of glutamine and ATP through an activated gamma-phospho-Glu-tRNA(Gln). In Ruegeria sp. (strain TM1040) (Silicibacter sp.), this protein is Glutamyl-tRNA(Gln) amidotransferase subunit A.